Here is a 321-residue protein sequence, read N- to C-terminus: N-acetyllactosaminide alpha-1,3-galactosyltransferase-like 1 (321 aa).

Over 1-6 (MQYKKE) the chain is Cytoplasmic. Residues 7–24 (TLLLILLAILLALTQRYS) form a helical; Signal-anchor for type II membrane protein membrane-spanning segment. The Lumenal portion of the chain corresponds to 25–321 (RTKDHLQKMY…IKVAWQPRIT (297 aa)). N-linked (GlcNAc...) asparagine glycosylation is found at asparagine 87 and asparagine 99. Substrate-binding positions include 95–100 (FATGNF), 187–189 (TAN), and 209–212 (HAWW). The active-site Nucleophile is glutamate 277.

Belongs to the glycosyltransferase 6 family. It depends on Mn(2+) as a cofactor.

Its subcellular location is the golgi apparatus. It is found in the golgi stack membrane. The catalysed reaction is a beta-D-galactosyl-(1-&gt;4)-N-acetyl-beta-D-glucosaminyl derivative + UDP-alpha-D-galactose = an alpha-D-galactosyl-(1-&gt;3)-beta-D-galactosyl-(1-&gt;4)-N-acetyl-beta-D-glucosaminyl derivative + UDP + H(+). The protein operates within protein modification; protein glycosylation. Its function is as follows. Synthesizes the galactose-alpha(1,3)-galactose group by catalyzing the transfer of a galactose residue, with an alpha-1,3 linkage, on terminal lactosaminide (Gal-beta-1,4-GlcNAc-R) disaccharide borne by a glycoprotein or a glycolipid. This is N-acetyllactosaminide alpha-1,3-galactosyltransferase-like 1 (Ggta1l1) from Rattus norvegicus (Rat).